The primary structure comprises 263 residues: Glutamate 5-kinase (263 aa).

Lysine 14 serves as a coordination point for ATP. Serine 52, aspartate 137, and asparagine 149 together coordinate substrate. ATP is bound by residues 169-170 (SD) and 211-217 (TGGIVTK).

This sequence belongs to the glutamate 5-kinase family. Homotetramer; oligomerization is not affected by L-proline feedback inhibition. Requires Mg(2+) as cofactor.

The catalysed reaction is L-glutamate + ATP = L-glutamyl 5-phosphate + ADP. It participates in amino-acid biosynthesis; L-proline biosynthesis; L-glutamate 5-semialdehyde from L-glutamate: step 1/2. Its activity is regulated as follows. Inhibited by L-proline as part of a negative feedback loop. Also inhibited by L-proline analogs 3,4-dehydro-L-proline, L-azetidine-2-carboxylic acid and L-4-thiazolidine carboxylic acid. Catalyzes the transfer of a phosphate group to glutamate to form L-glutamate 5-phosphate. May be important for growth and survival. This is Glutamate 5-kinase from Leishmania donovani.